The following is a 126-amino-acid chain: 13 kDa ribonucleoprotein-associated protein (126 aa).

This sequence belongs to the eukaryotic ribosomal protein eL8 family. In terms of assembly, component of the U3 snoRNP particle. Binds to the C'/D and B/C motifs in U3 snoRNA. Component of the 25S U4/U6.U5 tri-snRNP particle, a subcomplex of the spliceosome. Binds to the 5' stem-loop of U4 snRNA.

Its subcellular location is the nucleus. It is found in the nucleolus. Its function is as follows. Common component of the spliceosome and rRNA processing machinery. In association with the spliceosomal U4/U6.U5 tri-snRNP particle, required for splicing of pre-mRNA. In association with box C/D snoRNPs, required for processing of pre-ribosomal RNA (rRNA) and site-specific 2'-O-methylation of substrate RNAs. Essential for the accumulation and stability of U4 snRNA, U6 snRNA, and box C/D snoRNAs. This Yarrowia lipolytica (strain CLIB 122 / E 150) (Yeast) protein is 13 kDa ribonucleoprotein-associated protein (SNU13).